A 320-amino-acid polypeptide reads, in one-letter code: Ribonuclease Z (320 aa).

His62, His64, Asp66, His67, His139, Asp210, and His268 together coordinate Zn(2+). Asp66 serves as the catalytic Proton acceptor.

It belongs to the RNase Z family. As to quaternary structure, homodimer. It depends on Zn(2+) as a cofactor.

It carries out the reaction Endonucleolytic cleavage of RNA, removing extra 3' nucleotides from tRNA precursor, generating 3' termini of tRNAs. A 3'-hydroxy group is left at the tRNA terminus and a 5'-phosphoryl group is left at the trailer molecule.. Functionally, zinc phosphodiesterase, which displays some tRNA 3'-processing endonuclease activity. Probably involved in tRNA maturation, by removing a 3'-trailer from precursor tRNA. The protein is Ribonuclease Z of Cyanothece sp. (strain PCC 7425 / ATCC 29141).